The sequence spans 300 residues: Small ribosomal subunit biogenesis GTPase RsgA (300 aa).

Residues 69 to 231 (RSDEMRVKQF…LIDSPGFQAF (163 aa)) form the CP-type G domain. GTP-binding positions include 119-122 (NKID) and 172-180 (GQSGMGKST). Positions 255, 260, 262, and 268 each coordinate Zn(2+).

It belongs to the TRAFAC class YlqF/YawG GTPase family. RsgA subfamily. Monomer. Associates with 30S ribosomal subunit, binds 16S rRNA. The cofactor is Zn(2+).

The protein localises to the cytoplasm. In terms of biological role, one of several proteins that assist in the late maturation steps of the functional core of the 30S ribosomal subunit. Helps release RbfA from mature subunits. May play a role in the assembly of ribosomal proteins into the subunit. Circularly permuted GTPase that catalyzes slow GTP hydrolysis, GTPase activity is stimulated by the 30S ribosomal subunit. This chain is Small ribosomal subunit biogenesis GTPase RsgA, found in Bordetella bronchiseptica (strain ATCC BAA-588 / NCTC 13252 / RB50) (Alcaligenes bronchisepticus).